The sequence spans 466 residues: Ribulose bisphosphate carboxylase large chain (466 aa).

Residue Lys-5 is modified to N6,N6,N6-trimethyllysine. The substrate site is built by Asn-114 and Thr-164. Lys-166 acts as the Proton acceptor in catalysis. Residue Lys-168 participates in substrate binding. 3 residues coordinate Mg(2+): Lys-192, Asp-194, and Glu-195. Lys-192 carries the post-translational modification N6-carboxylysine. His-285 acts as the Proton acceptor in catalysis. 3 residues coordinate substrate: Arg-286, His-318, and Ser-370.

This sequence belongs to the RuBisCO large chain family. Type I subfamily. In terms of assembly, heterohexadecamer of 8 large chains and 8 small chains. Mg(2+) serves as cofactor.

The protein localises to the plastid. Its subcellular location is the chloroplast. It catalyses the reaction 2 (2R)-3-phosphoglycerate + 2 H(+) = D-ribulose 1,5-bisphosphate + CO2 + H2O. It carries out the reaction D-ribulose 1,5-bisphosphate + O2 = 2-phosphoglycolate + (2R)-3-phosphoglycerate + 2 H(+). Its function is as follows. RuBisCO catalyzes two reactions: the carboxylation of D-ribulose 1,5-bisphosphate, the primary event in carbon dioxide fixation, as well as the oxidative fragmentation of the pentose substrate in the photorespiration process. Both reactions occur simultaneously and in competition at the same active site. The chain is Ribulose bisphosphate carboxylase large chain from Lobelia sp.